The chain runs to 252 residues: 3-dehydroquinate dehydratase (252 aa).

3-dehydroquinate-binding positions include Ser21, Glu46–Arg48, and Arg82. Residue His143 is the Proton donor/acceptor of the active site. Catalysis depends on Lys170, which acts as the Schiff-base intermediate with substrate. Residues Arg213, Ser232, and Gln236 each coordinate 3-dehydroquinate.

It belongs to the type-I 3-dehydroquinase family. Homodimer.

The catalysed reaction is 3-dehydroquinate = 3-dehydroshikimate + H2O. Its pathway is metabolic intermediate biosynthesis; chorismate biosynthesis; chorismate from D-erythrose 4-phosphate and phosphoenolpyruvate: step 3/7. Involved in the third step of the chorismate pathway, which leads to the biosynthesis of aromatic amino acids. Catalyzes the cis-dehydration of 3-dehydroquinate (DHQ) and introduces the first double bond of the aromatic ring to yield 3-dehydroshikimate. The polypeptide is 3-dehydroquinate dehydratase (Salmonella dublin (strain CT_02021853)).